Here is a 239-residue protein sequence, read N- to C-terminus: Ribosomal RNA small subunit methyltransferase G (239 aa).

Residues Gly-78, Phe-83, 129–130 (AE), and Arg-148 contribute to the S-adenosyl-L-methionine site.

It belongs to the methyltransferase superfamily. RNA methyltransferase RsmG family.

Its subcellular location is the cytoplasm. Its function is as follows. Specifically methylates the N7 position of a guanine in 16S rRNA. This chain is Ribosomal RNA small subunit methyltransferase G, found in Clostridium botulinum (strain ATCC 19397 / Type A).